A 321-amino-acid polypeptide reads, in one-letter code: Torsin-2A (321 aa).

The signal sequence occupies residues 1-26 (MAAATRSCRPWGSLLGLIWLVSAAAA). ATP is bound at residue 93–100 (GWTGTGKS). Residue Asn-149 is glycosylated (N-linked (GlcNAc...) asparagine).

Belongs to the ClpA/ClpB family. Torsin subfamily. As to quaternary structure, homohexamer. Interacts with TOR1AIP1.

The protein resides in the endoplasmic reticulum lumen. The sequence is that of Torsin-2A (TOR2A) from Bos taurus (Bovine).